We begin with the raw amino-acid sequence, 559 residues long: Polypeptide N-acetylgalactosaminyltransferase 1 (559 aa).

The Cytoplasmic segment spans residues 1–8 (MRKFAYCK). A helical; Signal-anchor for type II membrane protein membrane pass occupies residues 9–28 (VVLATSLIWVLLDMFLLLYF). Residues 29–559 (SECNKCDEKK…LRNVTLPEIF (531 aa)) are Lumenal-facing. The tract at residues 45-65 (GDVLEPVQKPHEGPGEMGKPV) is disordered. N-linked (GlcNAc...) asparagine glycosylation occurs at N95. Disulfide bonds link C106–C339, C330–C408, C442–C459, C482–C497, and C523–C540. A catalytic subdomain A region spans residues 115–225 (LPTTSVVIVF…VGWLEPLLAR (111 aa)). D156 and R186 together coordinate substrate. Mn(2+) is bound by residues D209 and H211. Residues 285-347 (PVRTPTMAGG…TCSHVGHVFR (63 aa)) form a catalytic subdomain B region. Substrate is bound at residue W316. H344 contacts Mn(2+). Positions 347 and 352 each coordinate substrate. A Ricin B-type lectin domain is found at 429–551 (FSLGEIRNVE…GSRSQQWLLR (123 aa)). N552 is a glycosylation site (N-linked (GlcNAc...) asparagine).

This sequence belongs to the glycosyltransferase 2 family. GalNAc-T subfamily. Requires Mn(2+) as cofactor. As to expression, widely expressed. Expressed in all tissues tested.

The protein resides in the golgi apparatus. It is found in the golgi stack membrane. Its subcellular location is the secreted. The catalysed reaction is L-seryl-[protein] + UDP-N-acetyl-alpha-D-galactosamine = a 3-O-[N-acetyl-alpha-D-galactosaminyl]-L-seryl-[protein] + UDP + H(+). The enzyme catalyses L-threonyl-[protein] + UDP-N-acetyl-alpha-D-galactosamine = a 3-O-[N-acetyl-alpha-D-galactosaminyl]-L-threonyl-[protein] + UDP + H(+). The protein operates within protein modification; protein glycosylation. Its function is as follows. Catalyzes the initial reaction in O-linked oligosaccharide biosynthesis, the transfer of an N-acetyl-D-galactosamine residue to a serine or threonine residue on the protein receptor. Has a broad spectrum of substrates such as apomucin-, MUC5AC-, MUC1- and MUC2-derived peptides. In Homo sapiens (Human), this protein is Polypeptide N-acetylgalactosaminyltransferase 1.